Reading from the N-terminus, the 166-residue chain is MAAIPPDSWQPPNVYLETSMGIIVLELYWKHAPKTCKNFAELARRGYYNGTKFHRIIKDFMIQGGDPTGTGRGGASIYGKQFEDELHPDLKFTGAGILAMANAGPDTNGSQFFVTLAPTQWLDGKHTIFGRVCQGIGMVNRVGMVETNSQDRPVDDVKIIKAYPSG.

The 155-residue stretch at 10–164 (QPPNVYLETS…DDVKIIKAYP (155 aa)) folds into the PPIase cyclophilin-type domain. Cyclosporin A contacts are provided by residues 54–65 (HRIIKDFMIQGG), 70–71 (TG), 99–104 (AMANAG), 109–113 (GSQFF), Thr119, and Lys125. Ser149 is modified (phosphoserine).

This sequence belongs to the cyclophilin-type PPIase family. PPIL1 subfamily. Identified in the spliceosome C complex. Interacts with SNW1/SKIP. Interacts with CDC40/PRP17; this interaction leads to CDC40 isomerization. Interacts with RBM22.

It localises to the nucleus. It catalyses the reaction [protein]-peptidylproline (omega=180) = [protein]-peptidylproline (omega=0). Inhibited by Cyclosporin A. In terms of biological role, involved in pre-mRNA splicing as component of the spliceosome. PPIases accelerate the folding of proteins. It catalyzes the cis-trans isomerization of proline imidic peptide bonds in oligopeptides. Catalyzes prolyl peptide bond isomerization in CDC40/PRP17. Plays an important role in embryonic brain development; this function is independent of its isomerase activity. This Bos taurus (Bovine) protein is Peptidyl-prolyl cis-trans isomerase-like 1 (PPIL1).